A 380-amino-acid polypeptide reads, in one-letter code: Cytochrome b (380 aa).

4 helical membrane-spanning segments follow: residues 33-53 (FGSL…FLAM), 77-98 (WLIR…YMHI), 113-133 (WNIG…GYVL), and 178-198 (FFAF…LHLL). Residues His-83 and His-97 each coordinate heme b. Heme b-binding residues include His-182 and His-196. Position 201 (His-201) interacts with a ubiquinone. Transmembrane regions (helical) follow at residues 226–246 (YKDL…ALFA), 288–308 (LGGV…PILH), 320–340 (LTQF…WIGG), and 347–367 (FIII…VLAP).

This sequence belongs to the cytochrome b family. The cytochrome bc1 complex contains 3 respiratory subunits (MT-CYB, CYC1 and UQCRFS1), 2 core proteins (UQCRC1 and UQCRC2) and probably 6 low-molecular weight proteins. It depends on heme b as a cofactor.

It localises to the mitochondrion inner membrane. Component of the ubiquinol-cytochrome c reductase complex (complex III or cytochrome b-c1 complex) that is part of the mitochondrial respiratory chain. The b-c1 complex mediates electron transfer from ubiquinol to cytochrome c. Contributes to the generation of a proton gradient across the mitochondrial membrane that is then used for ATP synthesis. The protein is Cytochrome b (mt-cyb) of Salmo salar (Atlantic salmon).